The sequence spans 213 residues: General transcription factor 3C polypeptide 6 (213 aa).

A compositionally biased stretch (basic and acidic residues) spans 1 to 11 (MAAAADERSPE). 2 disordered regions span residues 1–20 (MAAAADERSPEDGEDEEEEE) and 191–213 (SGPLIDIPSETEGSVFMETQMLP). Ala2 carries the post-translational modification N-acetylalanine. Position 9 is a phosphoserine (Ser9).

It belongs to the TFIIIC subunit 6 family. Part of the TFIIIC subcomplex TFIIIC2, consisting of six subunits, GTF3C1, GTF3C2, GTF3C3, GTF3C4, GTF3C5 and GTF3C6. Interacts with GTF3C4 and GTF3C5.

It localises to the nucleus. Its function is as follows. Involved in RNA polymerase III-mediated transcription. Integral, tightly associated component of the DNA-binding TFIIIC2 subcomplex that directly binds tRNA and virus-associated RNA promoters. This chain is General transcription factor 3C polypeptide 6 (GTF3C6), found in Homo sapiens (Human).